The primary structure comprises 133 residues: Protein NrdI (133 aa).

Belongs to the NrdI family.

In terms of biological role, probably involved in ribonucleotide reductase function. The chain is Protein NrdI from Escherichia coli O17:K52:H18 (strain UMN026 / ExPEC).